We begin with the raw amino-acid sequence, 143 residues long: Cell division protein SepF (143 aa).

The protein belongs to the SepF family. As to quaternary structure, homodimer. Interacts with FtsZ.

Its subcellular location is the cytoplasm. In terms of biological role, cell division protein that is part of the divisome complex and is recruited early to the Z-ring. Probably stimulates Z-ring formation, perhaps through the cross-linking of FtsZ protofilaments. Its function overlaps with FtsA. This Geobacillus thermodenitrificans (strain NG80-2) protein is Cell division protein SepF.